We begin with the raw amino-acid sequence, 1274 residues long: RNA-directed RNA polymerase VP2 (1274 aa).

Positions 561–798 (LSTTSGSVVT…KLYALMGCRI (238 aa)) constitute a RdRp catalytic domain.

The protein belongs to the reoviridae RNA-directed RNA polymerase family.

The protein localises to the virion. The enzyme catalyses RNA(n) + a ribonucleoside 5'-triphosphate = RNA(n+1) + diphosphate. RNA-directed RNA polymerase that is involved in transcription and genome replication. Following infection, it catalyzes the synthesis of fully conservative plus strands. After core assembly, which consists in recruitment of one capped plus-strand for each genomic segments and polymerase complexes, the polymerase switches mode and catalyzes the synthesis of complementary minus-strands. The polypeptide is RNA-directed RNA polymerase VP2 (S2) (Aquareovirus C (isolate Golden shiner/USA/GSRV/1977) (AQRV-C)).